The following is a 352-amino-acid chain: N-lysine methyltransferase KMT5A (352 aa).

Residues 21–51 (AVAATAPGPEMVERRGPGRPRTNGENVFTGQ) are disordered. At serine 59 the chain carries Phosphoserine. Residues 87 to 202 (PLAGIYRKRD…KSKAELQSEE (116 aa)) are disordered. Residues 109–121 (MKAEEQKIKDARR) are compositionally biased toward basic and acidic residues. Threonine 140 bears the Phosphothreonine mark. Residues 156 to 172 (GLKKPVRGKQAPRKKAQ) show a composition bias toward basic residues. One can recognise an SET domain in the interval 216–337 (EGMKIDLIDG…AGEELLYDYG (122 aa)). Residues 226–228 (KGR), tyrosine 271, and 298–299 (NH) contribute to the S-adenosyl-L-methionine site.

Belongs to the class V-like SAM-binding methyltransferase superfamily. Histone-lysine methyltransferase family. PR/SET subfamily. In terms of assembly, interacts with L3MBTL1. Interacts with SIRT2 (phosphorylated form); the interaction is direct, stimulates KMT5A-mediated methyltransferase activity at histone H4 'Lys-20' (H4K20me1) and is increased in a H(2)O(2)-induced oxidative stress-dependent manner. Post-translationally, ubiquitinated and degraded by the DCX(DTL) complex.

It localises to the nucleus. It is found in the chromosome. It catalyses the reaction L-lysyl(20)-[histone H4] + S-adenosyl-L-methionine = N(6)-methyl-L-lysyl(20)-[histone H4] + S-adenosyl-L-homocysteine + H(+). The enzyme catalyses L-lysyl-[protein] + S-adenosyl-L-methionine = N(6)-methyl-L-lysyl-[protein] + S-adenosyl-L-homocysteine + H(+). In terms of biological role, protein-lysine N-methyltransferase that monomethylates both histones and non-histone proteins. Specifically monomethylates 'Lys-20' of histone H4 (H4K20me1). H4K20me1 is enriched during mitosis and represents a specific tag for epigenetic transcriptional repression. Mainly functions in euchromatin regions, thereby playing a central role in the silencing of euchromatic genes. Required for cell proliferation, probably by contributing to the maintenance of proper higher-order structure of DNA during mitosis. Involved in chromosome condensation and proper cytokinesis. Nucleosomes are preferred as substrate compared to free histones. Mediates monomethylation of p53/TP53 at 'Lys-382', leading to repress p53/TP53-target genes. Plays a negative role in TGF-beta response regulation and a positive role in cell migration. The protein is N-lysine methyltransferase KMT5A of Bos taurus (Bovine).